The chain runs to 95 residues: Aspartyl/glutamyl-tRNA(Asn/Gln) amidotransferase subunit C (95 aa).

This sequence belongs to the GatC family. Heterotrimer of A, B and C subunits.

The enzyme catalyses L-glutamyl-tRNA(Gln) + L-glutamine + ATP + H2O = L-glutaminyl-tRNA(Gln) + L-glutamate + ADP + phosphate + H(+). It catalyses the reaction L-aspartyl-tRNA(Asn) + L-glutamine + ATP + H2O = L-asparaginyl-tRNA(Asn) + L-glutamate + ADP + phosphate + 2 H(+). In terms of biological role, allows the formation of correctly charged Asn-tRNA(Asn) or Gln-tRNA(Gln) through the transamidation of misacylated Asp-tRNA(Asn) or Glu-tRNA(Gln) in organisms which lack either or both of asparaginyl-tRNA or glutaminyl-tRNA synthetases. The reaction takes place in the presence of glutamine and ATP through an activated phospho-Asp-tRNA(Asn) or phospho-Glu-tRNA(Gln). This is Aspartyl/glutamyl-tRNA(Asn/Gln) amidotransferase subunit C from Rhizobium etli (strain CIAT 652).